The chain runs to 119 residues: Large ribosomal subunit protein bL20 (119 aa).

Belongs to the bacterial ribosomal protein bL20 family.

In terms of biological role, binds directly to 23S ribosomal RNA and is necessary for the in vitro assembly process of the 50S ribosomal subunit. It is not involved in the protein synthesizing functions of that subunit. The protein is Large ribosomal subunit protein bL20 of Clostridium novyi (strain NT).